Reading from the N-terminus, the 356-residue chain is Golgi-resident adenosine 3',5'-bisphosphate 3'-phosphatase (356 aa).

Methionine 1 carries the N-acetylmethionine modification. Topologically, residues 1–12 (MAPMGIRLSPLG) are cytoplasmic. Residues 13 to 33 (VAVFFLLGLGVLYHLYSGFLA) form a helical membrane-spanning segment. The Lumenal portion of the chain corresponds to 34-356 (GRFSLFGLGG…KLPDLEKSGH (323 aa)). Residues 82–104 (VRESNVLHEKSKGKTREGAEDKM) form a disordered region. Aspartate 108 functions as the Proton acceptor in the catalytic mechanism. 4 residues coordinate Mg(2+): glutamate 131, aspartate 172, leucine 174, and aspartate 175. Catalysis depends on threonine 177, which acts as the Proton acceptor. Serine 240 and histidine 243 together coordinate AMP. Asparagine 257 carries N-linked (GlcNAc...) asparagine glycosylation. AMP is bound by residues glycine 266 and lysine 270. Mg(2+) is bound at residue aspartate 298.

This sequence belongs to the inositol monophosphatase superfamily. The cofactor is Mg(2+). Post-translationally, contains N-linked glycan resistant to endoglycosydase H.

It localises to the golgi apparatus. Its subcellular location is the trans-Golgi network membrane. The enzyme catalyses adenosine 3',5'-bisphosphate + H2O = AMP + phosphate. It functions in the pathway sulfur metabolism. Its activity is regulated as follows. Strongly inhibited by lithium. Exhibits 3'-nucleotidase activity toward adenosine 3',5'-bisphosphate (PAP), namely hydrolyzes adenosine 3',5'-bisphosphate into adenosine 5'-monophosphate (AMP) and a phosphate. May play a role in the formation of skeletal elements derived through endochondral ossification, possibly by clearing adenosine 3',5'-bisphosphate produced by Golgi sulfotransferases during glycosaminoglycan sulfation. Has no activity toward 3'-phosphoadenosine 5'-phosphosulfate (PAPS) or inositol phosphate (IP) substrates including I(1)P, I(1,4)P2, I(1,3,4)P3, I(1,4,5)P3 and I(1,3,4,5)P4. This chain is Golgi-resident adenosine 3',5'-bisphosphate 3'-phosphatase (Bpnt2), found in Rattus norvegicus (Rat).